We begin with the raw amino-acid sequence, 255 residues long: Diphthine synthase (255 aa).

Residues leucine 9, aspartate 85, valine 88, 113-114, leucine 164, alanine 207, and histidine 232 contribute to the S-adenosyl-L-methionine site; that span reads SI.

It belongs to the diphthine synthase family. Homodimer.

The catalysed reaction is 2-[(3S)-amino-3-carboxypropyl]-L-histidyl-[translation elongation factor 2] + 3 S-adenosyl-L-methionine = diphthine-[translation elongation factor 2] + 3 S-adenosyl-L-homocysteine + 3 H(+). It functions in the pathway protein modification; peptidyl-diphthamide biosynthesis. In terms of biological role, S-adenosyl-L-methionine-dependent methyltransferase that catalyzes the trimethylation of the amino group of the modified target histidine residue in translation elongation factor 2 (EF-2), to form an intermediate called diphthine. The three successive methylation reactions represent the second step of diphthamide biosynthesis. This is Diphthine synthase from Methanococcus vannielii (strain ATCC 35089 / DSM 1224 / JCM 13029 / OCM 148 / SB).